Here is a 251-residue protein sequence, read N- to C-terminus: Ubiquinone/menaquinone biosynthesis C-methyltransferase UbiE (251 aa).

Residues Thr-74, Asp-95, and 123 to 124 (NA) contribute to the S-adenosyl-L-methionine site.

This sequence belongs to the class I-like SAM-binding methyltransferase superfamily. MenG/UbiE family.

It catalyses the reaction a 2-demethylmenaquinol + S-adenosyl-L-methionine = a menaquinol + S-adenosyl-L-homocysteine + H(+). It carries out the reaction a 2-methoxy-6-(all-trans-polyprenyl)benzene-1,4-diol + S-adenosyl-L-methionine = a 5-methoxy-2-methyl-3-(all-trans-polyprenyl)benzene-1,4-diol + S-adenosyl-L-homocysteine + H(+). It participates in quinol/quinone metabolism; menaquinone biosynthesis; menaquinol from 1,4-dihydroxy-2-naphthoate: step 2/2. It functions in the pathway cofactor biosynthesis; ubiquinone biosynthesis. Methyltransferase required for the conversion of demethylmenaquinol (DMKH2) to menaquinol (MKH2) and the conversion of 2-polyprenyl-6-methoxy-1,4-benzoquinol (DDMQH2) to 2-polyprenyl-3-methyl-6-methoxy-1,4-benzoquinol (DMQH2). The sequence is that of Ubiquinone/menaquinone biosynthesis C-methyltransferase UbiE from Psychromonas ingrahamii (strain DSM 17664 / CCUG 51855 / 37).